Here is a 534-residue protein sequence, read N- to C-terminus: MRMQRRHLLKNAAAALAALGLPALPQWALAAKAVGLRRLGQPQPFDYAWLKGRARELAKAPYKSHKQVLPGPLEALNWDQYQSIRYRQDHALWADGNGKFQAKFFHLGLYFHTPVHIYDIVDGKAQQLAYDPAAFDYGKSGLGGKQLPKDLGFAGFRLNTRKDTERDFSAFLGASYFRAVGKEGQYGQSARGLAIDTGTGGPEEFPDFIAYYLEQPAADSNTVVVYGLLDSPSIAGAYRFAITNGDVLLMDIDSALYPRKTIERLGIGPCTSMYQVGENDNRMDWDWRPEIHDTDGLAMWTGGGEWIWRPLCNPPHVRFNMFVDENPRGFGLLQRDRNFDHYQDDGVFYEKRPCLWVEPKSGWGKGSVQLVEIPTVDETFDNIVAFWNPQAKPQPGQELLMGYRLYWGAQPPASAPLAHCVATRTGLGGIVGQKRSHFSWRFAVDFAGGELAALAKDPKAKVEAVLQVSRGTTEIVSARPLHELKGYRAMFDLVPPDEGTQQIDIRLYLRANGKPLTETWLYQWTPLAASERKN.

A signal peptide (tat-type signal) is located at residues 1-30 (MRMQRRHLLKNAAAALAALGLPALPQWALA).

It belongs to the OpgD/OpgG family. In terms of processing, predicted to be exported by the Tat system. The position of the signal peptide cleavage has not been experimentally proven.

Its subcellular location is the periplasm. It participates in glycan metabolism; osmoregulated periplasmic glucan (OPG) biosynthesis. In terms of biological role, probably involved in the control of the structural glucose backbone of osmoregulated periplasmic glucans (OPGs). The sequence is that of Glucans biosynthesis protein D from Xanthomonas oryzae pv. oryzae (strain PXO99A).